The sequence spans 398 residues: Protein ELC (398 aa).

One can recognise a UEV domain in the interval alanine 18–arginine 162. The disordered stretch occupies residues proline 157–valine 202. Polar residues predominate over residues tyrosine 175 to glutamine 187. Positions glutamate 247–asparagine 291 form a coiled coil. The region spanning aspartate 322 to alanine 390 is the SB domain.

Belongs to the ubiquitin-conjugating enzyme family. UEV subfamily. As to quaternary structure, component of the endosomal sorting required for transport complex I (ESCRT-I), composed of ELC, VPS28 and VPS37. Interacts with VPS28 and VPS37. Binds ubiquitin in vitro. Interacts with FREE1. Interacts with TOL9/TOM1D. Interacts with BRO1/ALIX. Interacts with SINAT1, SINAT2, SINAT3 and SINAT4. Ubiquitinated by SINAT1, SINAT2, SINAT3 and SINAT4 for subsequent proteasomal degradation. As to expression, expressed in roots, stems, leaves and flowers.

It localises to the early endosome. It is found in the late endosome. The protein resides in the prevacuolar compartment. In terms of biological role, component of the ESCRT-I complex (endosomal sorting complex required for transport I), a regulator of vesicular trafficking process. Required for the sorting of endocytic ubiquitinated cargos into multivesicular bodies (MVBs). May control nuclear division through the microtubule cytoskeleton. This is Protein ELC from Arabidopsis thaliana (Mouse-ear cress).